The primary structure comprises 2925 residues: Otogelin (2925 aa).

The signal sequence occupies residues 1–25; it reads MGVLASALCWLLCVWLPWGEQAAES. Residues 39–69 are disordered; it reads GRSGARGMRNVKGMRNGPAQTRVSSSSSHQE. Positions 56 to 69 are enriched in polar residues; the sequence is PAQTRVSSSSSHQE. An EGF-like domain is found at 102 to 139; the sequence is HRAKCAPSYLFSCFNGGECVHPAFCDCRRFNATGPRCQ. 5 disulfide bridges follow: C106–C120, C114–C126, C128–C138, C152–C285, and C199–C206. The 173-residue stretch at 150–322 folds into the VWFD 1 domain; it reads SICRAWGQHH…SWQEQAPNQP (173 aa). The segment at 316 to 335 is disordered; that stretch reads EQAPNQPPGPTTSSLPRPPC. Residues 326-335 show a composition bias toward polar residues; it reads TTSSLPRPPC. The region spanning 512 to 688 is the VWFD 2 domain; the sequence is AECSVTGDIH…NSWKTLSACS (177 aa). 3 disulfides stabilise this stretch: C514/C652, C536/C687, and C558/C566. Residues 780 to 844 form the TIL domain; the sequence is CEASKEYSPC…ADLCVPRNQC (65 aa). An N-linked (GlcNAc...) asparagine glycan is attached at N914. The VWFD 3 domain maps to 984-1152; sequence STCTAYGDRH…SWAAVECPDT (169 aa). Disulfide bonds link C986–C1115 and C1030–C1037. The disordered stretch occupies residues 1476–1540; that stretch reads LGNETLPPSQ…PVVSPGPTQT (65 aa). N1478 carries N-linked (GlcNAc...) asparagine glycosylation. Residues 1502–1528 show a composition bias toward low complexity; the sequence is PRTPTHRPALTPAAPLTTALNPPVTAT. N-linked (GlcNAc...) asparagine glycosylation occurs at N1612. Disordered regions lie at residues 1636–1679, 1693–1715, and 1737–1788; these read GHGS…HKAV, VPQP…AGTA, and KGEA…ASLS. Residues 1650-1659 show a composition bias toward polar residues; that stretch reads SLTASPSSRP. A compositionally biased stretch (low complexity) spans 1694–1708; sequence PQPTQAQSASSPSTP. Residues 1751 to 1764 are compositionally biased toward pro residues; that stretch reads SPQPHPLPSAPPRP. The VWFD 4 domain maps to 2110–2289; sequence CRCSIFPDLS…SWQVPSSLTS (180 aa). Intrachain disulfides connect C2112–C2249, C2840–C2889, C2854–C2903, C2865–C2920, and C2869–C2922. One can recognise a CTCK domain in the interval 2840-2925; it reads CKKVTIRMTI…EPTDCACQWS (86 aa).

This sequence belongs to the otogelin family. In terms of processing, N-glycosylated. Not O-glycosylated.

It localises to the apical cell membrane. The protein localises to the secreted. The protein resides in the extracellular space. Functionally, glycoprotein specific to acellular membranes of the inner ear. May be required for the anchoring of the otoconial membranes and cupulae to the underlying neuroepithelia in the vestibule. May be involved in the organization and/or stabilization of the fibrillar network that compose the tectorial membrane in the cochlea. May play a role in mechanotransduction processes. The sequence is that of Otogelin (OTOG) from Homo sapiens (Human).